Consider the following 492-residue polypeptide: MANYFNTLNLRQQLAQLGKCRFMARDEFADEAGYLKGKKVVIVGCGAQGLNQGLNMRDSGLDVAYALRKEAIAEKRASWRKATENGFKVGTYEELIPQADLVVNLTPDKQHSAVVQAVQPLMKDGAALGYSHGFNIVEVGEQVRKDITVVMVAPKCPGTEVREEYKRGFGVPTLIAVHPENDPKGEGMAIAKAWAAATGGHRAGVLESSFVAEVKSDLMGEQTILCGMLQAGSLLCFDKLVSEGTDAAYAEKLIQFGWETITEALKQGGITLMMDRLSNPAKLRAYALSEQLKEIMAPLFQKHMDDIISGEFSSGMMADWANDDKKLLNWREETGKTAFENAPQFEGKISEQEYFDHGVLMIAMVKAGVELAFETMVDSGIIEESAYYESLHELPLIANTIARKRLYEMNVVISDTAEYGNYLFANAAVPLLKGKFMDSLQAGDLGKSVAGTAVDNAQLRDVNEAIRNHPIEAVGHKLRGYMTDMKRIAVAG.

One can recognise a KARI N-terminal Rossmann domain in the interval Ala-15–Ser-208. NADP(+) is bound by residues Cys-45–Gln-48, Arg-68, Arg-76, Ser-78, and Asp-108–Gln-110. Residue His-132 is part of the active site. Position 158 (Gly-158) interacts with NADP(+). KARI C-terminal knotted domains lie at Ser-209 to Gln-344 and Phe-345 to Met-485. Residues Asp-217, Glu-221, Glu-389, and Glu-393 each coordinate Mg(2+). Residue Ser-414 participates in substrate binding.

It belongs to the ketol-acid reductoisomerase family. It depends on Mg(2+) as a cofactor.

It carries out the reaction (2R)-2,3-dihydroxy-3-methylbutanoate + NADP(+) = (2S)-2-acetolactate + NADPH + H(+). It catalyses the reaction (2R,3R)-2,3-dihydroxy-3-methylpentanoate + NADP(+) = (S)-2-ethyl-2-hydroxy-3-oxobutanoate + NADPH + H(+). It participates in amino-acid biosynthesis; L-isoleucine biosynthesis; L-isoleucine from 2-oxobutanoate: step 2/4. Its pathway is amino-acid biosynthesis; L-valine biosynthesis; L-valine from pyruvate: step 2/4. In terms of biological role, involved in the biosynthesis of branched-chain amino acids (BCAA). Catalyzes an alkyl-migration followed by a ketol-acid reduction of (S)-2-acetolactate (S2AL) to yield (R)-2,3-dihydroxy-isovalerate. In the isomerase reaction, S2AL is rearranged via a Mg-dependent methyl migration to produce 3-hydroxy-3-methyl-2-ketobutyrate (HMKB). In the reductase reaction, this 2-ketoacid undergoes a metal-dependent reduction by NADPH to yield (R)-2,3-dihydroxy-isovalerate. In Yersinia enterocolitica serotype O:8 / biotype 1B (strain NCTC 13174 / 8081), this protein is Ketol-acid reductoisomerase (NADP(+)).